Here is a 324-residue protein sequence, read N- to C-terminus: Anthranilate phosphoribosyltransferase (324 aa).

5-phospho-alpha-D-ribose 1-diphosphate-binding positions include Gly-72, 75–76, Thr-80, 82–85, 99–107, and Ser-111; these read GD, NVST, and KHGNVSVTS. Gly-72 provides a ligand contact to anthranilate. Mg(2+) is bound at residue Ser-84. Asn-102 is a binding site for anthranilate. Anthranilate is bound at residue Arg-157. Asp-215 and Glu-216 together coordinate Mg(2+).

It belongs to the anthranilate phosphoribosyltransferase family. As to quaternary structure, homodimer. The cofactor is Mg(2+).

The enzyme catalyses N-(5-phospho-beta-D-ribosyl)anthranilate + diphosphate = 5-phospho-alpha-D-ribose 1-diphosphate + anthranilate. It functions in the pathway amino-acid biosynthesis; L-tryptophan biosynthesis; L-tryptophan from chorismate: step 2/5. Catalyzes the transfer of the phosphoribosyl group of 5-phosphorylribose-1-pyrophosphate (PRPP) to anthranilate to yield N-(5'-phosphoribosyl)-anthranilate (PRA). The sequence is that of Anthranilate phosphoribosyltransferase from Pyrococcus furiosus (strain ATCC 43587 / DSM 3638 / JCM 8422 / Vc1).